The following is a 2262-amino-acid chain: Protein Ycf2 (2262 aa).

1607-1614 (GFIGTGRS) contacts ATP.

The protein belongs to the Ycf2 family.

Its subcellular location is the plastid. The protein localises to the chloroplast stroma. In terms of biological role, probable ATPase of unknown function. Its presence in a non-photosynthetic plant (Epifagus virginiana) and experiments in tobacco indicate that it has an essential function which is probably not related to photosynthesis. The protein is Protein Ycf2 of Nuphar advena (Common spatterdock).